Here is a 729-residue protein sequence, read N- to C-terminus: Catalase-peroxidase (729 aa).

The segment at 1-26 (MTMDQKTDNAGKCPVAHTAPRGRSNR) is disordered. Residues 97–219 (WHSAGTYRIT…LAAVQMGLIY (123 aa)) constitute a cross-link (tryptophyl-tyrosyl-methioninium (Trp-Tyr) (with M-245)). His-98 serves as the catalytic Proton acceptor. The segment at residues 219–245 (YVNPEGPNGNPDPVAAAHDIRETFARM) is a cross-link (tryptophyl-tyrosyl-methioninium (Tyr-Met) (with W-97)). His-260 lines the heme b pocket.

This sequence belongs to the peroxidase family. Peroxidase/catalase subfamily. Homodimer or homotetramer. The cofactor is heme b. Post-translationally, formation of the three residue Trp-Tyr-Met cross-link is important for the catalase, but not the peroxidase activity of the enzyme.

It carries out the reaction H2O2 + AH2 = A + 2 H2O. It catalyses the reaction 2 H2O2 = O2 + 2 H2O. Bifunctional enzyme with both catalase and broad-spectrum peroxidase activity. The polypeptide is Catalase-peroxidase (Sinorhizobium medicae (strain WSM419) (Ensifer medicae)).